The sequence spans 1390 residues: DNA-directed RNA polymerase subunit beta (1390 aa).

It belongs to the RNA polymerase beta chain family. In terms of assembly, the RNAP catalytic core consists of 2 alpha, 1 beta, 1 beta' and 1 omega subunit. When a sigma factor is associated with the core the holoenzyme is formed, which can initiate transcription.

It carries out the reaction RNA(n) + a ribonucleoside 5'-triphosphate = RNA(n+1) + diphosphate. Functionally, DNA-dependent RNA polymerase catalyzes the transcription of DNA into RNA using the four ribonucleoside triphosphates as substrates. The polypeptide is DNA-directed RNA polymerase subunit beta (Methylobacillus flagellatus (strain ATCC 51484 / DSM 6875 / VKM B-1610 / KT)).